A 792-amino-acid polypeptide reads, in one-letter code: Alpha-1,6-mannosylglycoprotein 6-beta-N-acetylglucosaminyltransferase B (792 aa).

The Cytoplasmic segment spans residues 1 to 24 (MITVNPDGKIMVRRCLVTLRPFRL). Residues 25-45 (FVLGIGFFTLCFLMTSLGGQF) form a helical; Signal-anchor for type II membrane protein membrane-spanning segment. At 46–792 (SARRLGDSPF…GQVALCQGCL (747 aa)) the chain is on the lumenal side. N-linked (GlcNAc...) asparagine glycosylation occurs at asparagine 127. 4 cysteine pairs are disulfide-bonded: cysteine 157/cysteine 195, cysteine 168/cysteine 208, cysteine 184/cysteine 353, and cysteine 387/cysteine 644. N-linked (GlcNAc...) asparagine glycosylation occurs at asparagine 675. 5 disulfide bridges follow: cysteine 700/cysteine 775, cysteine 704/cysteine 777, cysteine 711/cysteine 764, cysteine 732/cysteine 753, and cysteine 788/cysteine 791.

It belongs to the glycosyltransferase 18 family. It depends on Mn(2+) as a cofactor. Present in brain (at protein level). Predominantly expressed in hippocampus, superficial layers of the brain cortex, striatum, nucleus accumbens, a subset of nuclei in the thalamus, inferior colliculus, brain stem and cerebellum.

The protein resides in the golgi apparatus membrane. The enzyme catalyses N(4)-{beta-D-GlcNAc-(1-&gt;2)-[beta-D-GlcNAc-(1-&gt;4)]-alpha-D-Man-(1-&gt;3)-[beta-D-GlcNAc-(1-&gt;2)-alpha-D-Man-(1-&gt;6)]-beta-D-Man-(1-&gt;4)-beta-D-GlcNAc-(1-&gt;4)-beta-D-GlcNAc}-L-asparaginyl-[protein] + UDP-N-acetyl-alpha-D-glucosamine = N(4)-{beta-D-GlcNAc-(1-&gt;2)-[beta-D-GlcNAc-(1-&gt;4)]-alpha-D-Man-(1-&gt;3)-[beta-D-GlcNAc-(1-&gt;2)-[beta-D-GlcNAc-(1-&gt;6)]-alpha-D-Man-(1-&gt;6)]-beta-D-Man-(1-&gt;4)-beta-D-GlcNAc-(1-&gt;4)-beta-D-GlcNAc}-L-asparaginyl-[protein] + UDP + H(+). The catalysed reaction is 3-O-[N-acetyl-beta-D-glucosaminyl-(1-&gt;2)-alpha-D-mannosyl]-L-seryl-[protein] + UDP-N-acetyl-alpha-D-glucosamine = O(3)-{N-acetyl-beta-D-glucosaminyl-(1-&gt;2)-[N-acetyl-beta-D-glucosaminyl-(1-&gt;6)]-alpha-D-mannosyl}-L-seryl-[protein] + UDP + H(+). It catalyses the reaction 3-O-[N-acetyl-beta-D-glucosaminyl-(1-&gt;2)-alpha-D-mannosyl]-L-threonyl-[protein] + UDP-N-acetyl-alpha-D-glucosamine = O(3)-{N-acetyl-beta-D-glucosaminyl-(1-&gt;2)-[N-acetyl-beta-D-glucosaminyl-(1-&gt;6)]-alpha-D-mannosyl}-L-threonyl-[protein] + UDP + H(+). Its pathway is protein modification; protein glycosylation. In terms of biological role, glycosyltransferase that acts on alpha-linked mannose of N-glycans and O-mannosyl glycans. Catalyzes the transfer of N-acetylglucosamine (GlcNAc) to the beta 1-6 linkage of the mannose residue of GlcNAc-beta1,2-Man-alpha on both the alpha1,3- and alpha1,6-linked mannose arms in the core structure of N-glycan. Also acts on the GlcNAc-beta1,2-Man-alpha1-Ser/Thr moiety, forming a 2,6-branched structure in brain O-mannosyl glycan. Plays an active role in modulating integrin and laminin-dependent adhesion and migration of neuronal cells via its activity in the O-mannosyl glycan pathway. In Mus musculus (Mouse), this protein is Alpha-1,6-mannosylglycoprotein 6-beta-N-acetylglucosaminyltransferase B (Mgat5b).